Here is a 200-residue protein sequence, read N- to C-terminus: Protein GrpE (200 aa).

It belongs to the GrpE family. Homodimer.

Its subcellular location is the cytoplasm. Its function is as follows. Participates actively in the response to hyperosmotic and heat shock by preventing the aggregation of stress-denatured proteins, in association with DnaK and GrpE. It is the nucleotide exchange factor for DnaK and may function as a thermosensor. Unfolded proteins bind initially to DnaJ; upon interaction with the DnaJ-bound protein, DnaK hydrolyzes its bound ATP, resulting in the formation of a stable complex. GrpE releases ADP from DnaK; ATP binding to DnaK triggers the release of the substrate protein, thus completing the reaction cycle. Several rounds of ATP-dependent interactions between DnaJ, DnaK and GrpE are required for fully efficient folding. The protein is Protein GrpE of Shewanella piezotolerans (strain WP3 / JCM 13877).